The following is a 336-amino-acid chain: uncharacterized protein (336 aa).

Position 29–36 (29–36) interacts with ATP; the sequence is GPKSSGKS.

It belongs to the archaeal ATPase family.

This is an uncharacterized protein from Methanocaldococcus jannaschii (strain ATCC 43067 / DSM 2661 / JAL-1 / JCM 10045 / NBRC 100440) (Methanococcus jannaschii).